The primary structure comprises 572 residues: MIKNTVRIINKNSNTFINIRNNNNNNINSSLKSGFGTIKRFNTTLNHNSSNSNIQTPISINSTIINNNNNSNNNNSNNIINNDLNVVKFSTISTPNSILDTLNENHSNQTNNVNNKNYNNNNNNFEKDDKFGPPNNQNNNKLDLDTSKLYVSKSTGELFFTFMILKVCSINFISDNSQKFLNLFEKLGLSKPLNFFIKYSFFKQFCAGETIRETEIFTEKLNKLGIGTILDYAIEELAGSSEGFDSVAENICETIRVAAKNPTNSFSCVKFTGLVTPSVLEKMNTLVSNVTTNVSELPIESFNSPLDFYLNQSSSLMKQGSEPLLTSKDIKEIKEFFNRMDKIFQLCHQRGVPILVDAEQSYYQVAIHHLTMSYSIKYNKEKPIIYNTYQMYLVNGMNVLKQHFELSSSQKFNFKLGAKIVRGAYMVTESERSQRLSTENPVLPTIQDTHKSYNTALDFLLNQIKSDPNSIGLMIASHNEDSINLGTKLIKQYKIDPTNPNIQFGQLFGMADFLSFNLVDQHQRIFKYVPFGPVEEVLPYLIRRMHENKGFIGSNSDKELFYLKKEIKRRLF.

Residues 105-124 (NHSNQTNNVNNKNYNNNNNN) show a composition bias toward low complexity. Residues 105-140 (NHSNQTNNVNNKNYNNNNNNFEKDDKFGPPNNQNNN) are disordered.

Belongs to the proline oxidase family. The cofactor is FAD.

It localises to the mitochondrion matrix. It catalyses the reaction L-proline + a quinone = (S)-1-pyrroline-5-carboxylate + a quinol + H(+). The protein operates within amino-acid degradation; L-proline degradation into L-glutamate; L-glutamate from L-proline: step 1/2. In terms of biological role, converts proline to delta-1-pyrroline-5-carboxylate. This chain is Proline dehydrogenase 1, mitochondrial (prodh), found in Dictyostelium discoideum (Social amoeba).